We begin with the raw amino-acid sequence, 785 residues long: Ubiquitin carboxyl-terminal hydrolase 10 (785 aa).

2 stretches are compositionally biased toward polar residues: residues 113-122 (LTLDSGSNAE) and 262-277 (DTTESLGVTNGQTLES). Disordered regions lie at residues 113–145 (LTLDSGSNAENDGLSGGLGQRERKKKKKRPPGY) and 262–314 (DTTE…ATAT). A compositionally biased stretch (basic and acidic residues) spans 290 to 304 (HTVESTDSDQAKPEE). The span at 305–314 (ASPTTEATAT) shows a compositional bias: low complexity. Residues 401–782 (RGLINKGNWC…TAYLLYYRRV (382 aa)) form the USP domain. The active-site Nucleophile is the C410. The tract at residues 537-581 (EKLSVSNGPEVQTVREEEEQDEQGEGSEDEWEQVGPRNKSSVTRQ) is disordered. A compositionally biased stretch (acidic residues) spans 552 to 568 (EEEEQDEQGEGSEDEWE). The active-site Proton acceptor is H736.

It belongs to the peptidase C19 family. USP10 subfamily.

The protein resides in the cytoplasm. It is found in the nucleus. It catalyses the reaction Thiol-dependent hydrolysis of ester, thioester, amide, peptide and isopeptide bonds formed by the C-terminal Gly of ubiquitin (a 76-residue protein attached to proteins as an intracellular targeting signal).. Functionally, hydrolase that can remove conjugated ubiquitin from target proteins such as p53/TP53, RPS2/us5, RPS3/us3, RPS10/eS10, BECN1, SNX3 and CFTR. Acts as an essential regulator of p53/TP53 stability: in unstressed cells, specifically deubiquitinates p53/TP53 in the cytoplasm, leading to counteracts MDM2 action and stabilize p53/TP53. Following DNA damage, translocates to the nucleus and deubiquitinates p53/TP53, leading to regulate the p53/TP53-dependent DNA damage response. Component of a regulatory loop that controls autophagy and p53/TP53 levels. Plays a key role in 40S ribosome subunit recycling when a ribosome has stalled during translation: acts both by inhibiting formation of stress granules, which store stalled translation pre-initiation complexes, and mediating deubiquitination of 40S ribosome subunits. Deubiquitinates CFTR in early endosomes, enhancing its endocytic recycling. The chain is Ubiquitin carboxyl-terminal hydrolase 10 (USP10) from Gallus gallus (Chicken).